The chain runs to 618 residues: Delta-like protein 3 (618 aa).

The N-terminal stretch at 1–26 is a signal peptide; it reads MVSPRMSGLLSQTVILALIFLPQTRP. The Extracellular segment spans residues 27 to 492; it reads AGVFELQIHS…LRPGDPQRYL (466 aa). The 40-residue stretch at 176 to 215 folds into the DSL domain; sequence ARCEPPAVGTACTRLCRPRSAPSRCGPGLRPCAPLEDECE. 6 EGF-like domains span residues 216-249, 274-310, 312-351, 353-389, 391-427, and 429-465; these read APLVCRAGCSPEHGFCEQPGECRCLEGWTGPLCT, GPGPCDGNPCANGGSCSETPRSFECTCPRGFYGLRCE, SGVTCADGPCFNGGLCVGGADPDSAYICHCPPGFQGSNCE, RVDRCSLQPCRNGGLCLDLGHALRCRCRAGFAGPRCE, DLDDCAGRACANGGTCVEGGGAHRCSCALGFGGRDCR, and RADPCAARPCAHGGRCYAHFSGLVCACAPGYMGARCE. 18 disulfide bridges follow: cysteine 220-cysteine 231, cysteine 224-cysteine 237, cysteine 239-cysteine 248, cysteine 278-cysteine 289, cysteine 283-cysteine 298, cysteine 300-cysteine 309, cysteine 316-cysteine 327, cysteine 321-cysteine 339, cysteine 341-cysteine 350, cysteine 357-cysteine 368, cysteine 362-cysteine 377, cysteine 379-cysteine 388, cysteine 395-cysteine 406, cysteine 400-cysteine 415, cysteine 417-cysteine 426, cysteine 433-cysteine 444, cysteine 438-cysteine 453, and cysteine 455-cysteine 464. The chain crosses the membrane as a helical span at residues 493-513; it reads LPPALGLLVAAGVAGAALLLV. At 514-618 the chain is on the cytoplasmic side; sequence HVRRRGHSQD…PYPSSILSVK (105 aa). Over residues 546 to 562 the composition is skewed to polar residues; that stretch reads NLRTQEGSGDGPSSSVD. Residues 546 to 566 are disordered; the sequence is NLRTQEGSGDGPSSSVDWNRP.

Can bind and activate Notch-1 or another Notch receptor. Post-translationally, ubiquitinated by MIB (MIB1 or MIB2), leading to its endocytosis and subsequent degradation.

It is found in the membrane. Its function is as follows. Inhibits primary neurogenesis. May be required to divert neurons along a specific differentiation pathway. Plays a role in the formation of somite boundaries during segmentation of the paraxial mesoderm. This chain is Delta-like protein 3 (DLL3), found in Homo sapiens (Human).